The following is a 169-amino-acid chain: Cytochrome c-type biogenesis protein CcmE (169 aa).

At 1–7 (MTRKQRR) the chain is on the cytoplasmic side. Residues 8–28 (MTIIGGSLAVLALAAALVLNA) traverse the membrane as a helical; Signal-anchor for type II membrane protein segment. The Periplasmic portion of the chain corresponds to 29–169 (LRDSIVFFST…AQGNPQGAVR (141 aa)). 2 residues coordinate heme: histidine 122 and tyrosine 126. Residues 143 to 169 (DDYGGKASDGVKPAATTAQGNPQGAVR) form a disordered region. Polar residues predominate over residues 158 to 169 (TTAQGNPQGAVR).

The protein belongs to the CcmE/CycJ family.

The protein localises to the cell inner membrane. Functionally, heme chaperone required for the biogenesis of c-type cytochromes. Transiently binds heme delivered by CcmC and transfers the heme to apo-cytochromes in a process facilitated by CcmF and CcmH. In Bradyrhizobium diazoefficiens (strain JCM 10833 / BCRC 13528 / IAM 13628 / NBRC 14792 / USDA 110), this protein is Cytochrome c-type biogenesis protein CcmE.